Consider the following 275-residue polypeptide: NH(3)-dependent NAD(+) synthetase (275 aa).

Residue 50–57 coordinates ATP; sequence GISGGVDS. A Mg(2+)-binding site is contributed by Asp-56. Position 147 (Arg-147) interacts with deamido-NAD(+). Thr-167 contributes to the ATP binding site. A Mg(2+)-binding site is contributed by Glu-172. The deamido-NAD(+) site is built by Lys-180 and Asp-187. ATP is bound by residues Lys-196 and Thr-218. 267–268 provides a ligand contact to deamido-NAD(+); the sequence is HK.

It belongs to the NAD synthetase family. Homodimer.

It carries out the reaction deamido-NAD(+) + NH4(+) + ATP = AMP + diphosphate + NAD(+) + H(+). The protein operates within cofactor biosynthesis; NAD(+) biosynthesis; NAD(+) from deamido-NAD(+) (ammonia route): step 1/1. In terms of biological role, catalyzes the ATP-dependent amidation of deamido-NAD to form NAD. Uses ammonia as a nitrogen source. This is NH(3)-dependent NAD(+) synthetase from Pseudomonas putida (strain ATCC 700007 / DSM 6899 / JCM 31910 / BCRC 17059 / LMG 24140 / F1).